An 894-amino-acid chain; its full sequence is Probable ion channel SYM8 (894 aa).

The tract at residues Met1–Lys124 is disordered. 3 stretches are compositionally biased toward polar residues: residues Glu7–Lys16, Thr24–Leu33, and Ile44–Tyr63. Transmembrane regions (helical) follow at residues Ser134–Leu154, Thr204–Ile224, Leu267–Val287, and Ile319–Val339. RCK N-terminal domains follow at residues Arg360–Val501 and Pro620–Ile769. A coiled-coil region spans residues Val390 to Gly415.

This sequence belongs to the castor/pollux (TC 1.A.1.23) family. As to quaternary structure, homotetramer.

Its subcellular location is the nucleus membrane. In terms of biological role, required for both rhizobial and mycorrhizal symbiosis. Involved in Nod-factor-induced calcium spiking. May induce a change in membrane polarization that activates the opening of a calcium channel required for calcium spiking. Might be calcium gated. The chain is Probable ion channel SYM8 (SYM8) from Pisum sativum (Garden pea).